The primary structure comprises 663 residues: Beta-galactosidase BgaH (663 aa).

R103 is a substrate binding site. C107 provides a ligand contact to Zn(2+). Residue N141 coordinates substrate. The active-site Proton donor is the E142. Zn(2+)-binding residues include C151, C153, and C156. E311 serves as the catalytic Nucleophile. Substrate-binding positions include W319 and 359–362 (EQYH).

The protein belongs to the glycosyl hydrolase 42 family. In terms of assembly, homodimer.

The enzyme catalyses Hydrolysis of terminal non-reducing beta-D-galactose residues in beta-D-galactosides.. Requires 4 M NaCl for maximal activity. Loss of activity if DTT or beta-mercaptoethanol is omitted from buffers. Addition of 5-20 mM EDTA, 1 mM Cu(2+) or 1 mM Zn(2+) results in loss of activity. In terms of biological role, when overexpressed, cleaves several different substrates including o-nitrophenyl-beta-D-galactopyranoside (ONPG), chromogen 5-bromo-4-chloro-3-indolyl-beta-D-galactopyranoside (X-Gal) and lactulose, but not lactose. Also has beta-D-fucosidase activity. No beta-L-fucosidase, beta-glucosidase, beta-arabinosidase or beta-xylosidase activity. The protein is Beta-galactosidase BgaH of Haloferax lucentense (strain DSM 14919 / JCM 9276 / NCIMB 13854 / Aa 2.2) (Haloferax alicantei).